A 225-amino-acid polypeptide reads, in one-letter code: ATP-dependent dethiobiotin synthetase BioD (225 aa).

Residue 12–17 (EVGKTY) participates in ATP binding. Thr16 contacts Mg(2+). Lys37 is an active-site residue. Ser41 is a substrate binding site. Residues Asp52, 114-117 (EGAG), and 174-175 (NC) contribute to the ATP site. Residues Asp52 and Glu114 each coordinate Mg(2+).

It belongs to the dethiobiotin synthetase family. Homodimer. It depends on Mg(2+) as a cofactor.

It localises to the cytoplasm. It carries out the reaction (7R,8S)-7,8-diammoniononanoate + CO2 + ATP = (4R,5S)-dethiobiotin + ADP + phosphate + 3 H(+). It functions in the pathway cofactor biosynthesis; biotin biosynthesis; biotin from 7,8-diaminononanoate: step 1/2. In terms of biological role, catalyzes a mechanistically unusual reaction, the ATP-dependent insertion of CO2 between the N7 and N8 nitrogen atoms of 7,8-diaminopelargonic acid (DAPA, also called 7,8-diammoniononanoate) to form a ureido ring. This Francisella tularensis subsp. novicida (strain U112) protein is ATP-dependent dethiobiotin synthetase BioD.